We begin with the raw amino-acid sequence, 61 residues long: Putative defensin-like protein 72 (61 aa).

Intrachain disulfides connect Cys-21–Cys-59, Cys-25–Cys-48, Cys-34–Cys-57, and Cys-38–Cys-58.

The protein belongs to the DEFL family.

This chain is Putative defensin-like protein 72, found in Arabidopsis thaliana (Mouse-ear cress).